The primary structure comprises 178 residues: Ribosome maturation factor RimP (178 aa).

The protein belongs to the RimP family.

The protein resides in the cytoplasm. In terms of biological role, required for maturation of 30S ribosomal subunits. The sequence is that of Ribosome maturation factor RimP from Streptococcus pyogenes serotype M5 (strain Manfredo).